Consider the following 315-residue polypeptide: Methionyl-tRNA formyltransferase (315 aa).

Position 113 to 116 (113 to 116 (SLLP)) interacts with (6S)-5,6,7,8-tetrahydrofolate.

Belongs to the Fmt family.

The catalysed reaction is L-methionyl-tRNA(fMet) + (6R)-10-formyltetrahydrofolate = N-formyl-L-methionyl-tRNA(fMet) + (6S)-5,6,7,8-tetrahydrofolate + H(+). Attaches a formyl group to the free amino group of methionyl-tRNA(fMet). The formyl group appears to play a dual role in the initiator identity of N-formylmethionyl-tRNA by promoting its recognition by IF2 and preventing the misappropriation of this tRNA by the elongation apparatus. The polypeptide is Methionyl-tRNA formyltransferase (Enterobacter sp. (strain 638)).